The sequence spans 271 residues: uncharacterized protein (271 aa).

Positions 77 to 205 constitute a DOD-type homing endonuclease domain; the sequence is IIGVYFGDAN…SKELLKKLDV (129 aa).

This is an uncharacterized protein from Methanocaldococcus jannaschii (strain ATCC 43067 / DSM 2661 / JAL-1 / JCM 10045 / NBRC 100440) (Methanococcus jannaschii).